The chain runs to 272 residues: Alcohol dehydrogenase-related 31 kDa protein (272 aa).

NAD(+) is bound at residue 11 to 34 (YVADCGGIALETSKVLMTKNIAKL). Substrate is bound at residue S139. Y152 serves as the catalytic Proton acceptor.

This sequence belongs to the short-chain dehydrogenases/reductases (SDR) family.

The polypeptide is Alcohol dehydrogenase-related 31 kDa protein (Adhr) (Drosophila melanogaster (Fruit fly)).